The chain runs to 380 residues: Queuine tRNA-ribosyltransferase (380 aa).

Catalysis depends on Asp-96, which acts as the Proton acceptor. Substrate contacts are provided by residues 96–100 (DSGGF), Asp-150, Gln-193, and Gly-220. An RNA binding region spans residues 251–257 (GVGAPDS). Asp-270 (nucleophile) is an active-site residue. The RNA binding; important for wobble base 34 recognition stretch occupies residues 275-279 (TRIAR). Cys-308, Cys-310, Cys-313, and His-339 together coordinate Zn(2+).

It belongs to the queuine tRNA-ribosyltransferase family. As to quaternary structure, homodimer. Within each dimer, one monomer is responsible for RNA recognition and catalysis, while the other monomer binds to the replacement base PreQ1. It depends on Zn(2+) as a cofactor.

The catalysed reaction is 7-aminomethyl-7-carbaguanine + guanosine(34) in tRNA = 7-aminomethyl-7-carbaguanosine(34) in tRNA + guanine. The protein operates within tRNA modification; tRNA-queuosine biosynthesis. Catalyzes the base-exchange of a guanine (G) residue with the queuine precursor 7-aminomethyl-7-deazaguanine (PreQ1) at position 34 (anticodon wobble position) in tRNAs with GU(N) anticodons (tRNA-Asp, -Asn, -His and -Tyr). Catalysis occurs through a double-displacement mechanism. The nucleophile active site attacks the C1' of nucleotide 34 to detach the guanine base from the RNA, forming a covalent enzyme-RNA intermediate. The proton acceptor active site deprotonates the incoming PreQ1, allowing a nucleophilic attack on the C1' of the ribose to form the product. After dissociation, two additional enzymatic reactions on the tRNA convert PreQ1 to queuine (Q), resulting in the hypermodified nucleoside queuosine (7-(((4,5-cis-dihydroxy-2-cyclopenten-1-yl)amino)methyl)-7-deazaguanosine). The polypeptide is Queuine tRNA-ribosyltransferase (Streptococcus equi subsp. zooepidemicus (strain H70)).